Consider the following 133-residue polypeptide: Small ribosomal subunit protein uS9 (133 aa).

The segment at 102–133 is disordered; sequence KPKGLLTRDPREVERKKYGLKKARRAPQFSKR. Residues 107–118 show a composition bias toward basic and acidic residues; it reads LTRDPREVERKK. Residues 119-133 are compositionally biased toward basic residues; the sequence is YGLKKARRAPQFSKR.

The protein belongs to the universal ribosomal protein uS9 family.

The chain is Small ribosomal subunit protein uS9 from Deinococcus deserti (strain DSM 17065 / CIP 109153 / LMG 22923 / VCD115).